A 216-amino-acid polypeptide reads, in one-letter code: Small ribosomal subunit protein uS3c (216 aa).

The region spanning 43–118 is the KH type-2 domain; that stretch reads IKNYLQKNMR…KLNIAITRIT (76 aa).

It belongs to the universal ribosomal protein uS3 family. Part of the 30S ribosomal subunit.

The protein localises to the plastid. Its subcellular location is the chloroplast. This chain is Small ribosomal subunit protein uS3c (rps3), found in Eucalyptus globulus subsp. globulus (Tasmanian blue gum).